We begin with the raw amino-acid sequence, 190 residues long: Elongation factor P-like protein (190 aa).

Belongs to the elongation factor P family.

In Klebsiella pneumoniae subsp. pneumoniae (strain ATCC 700721 / MGH 78578), this protein is Elongation factor P-like protein.